The sequence spans 625 residues: MTFNYDVIVVGAGHAGCEAAAAAANLGSKTLLITMDMNKIAQMSCNPAVGGIAKGQIVREIDALGGYMGIVTDQTAIQFRMLNRSKGPAMWSPRAQSDRARFIDCWRGILENMPNLSIWQDMVQELIIEHGQVCGVRTGMNVVFRAGAVVLTNGTFLNGLLHIGRTQIRGGRIAEPAATGLTEQLISLGIQTDRMKTGTPVRIDGRSVHFDEMEEQPGENDFHKFSYMDTSHRKLKQLSCWTTFTNEACHDILREGLPDSPLYNGQIKSIGPRYCPSIETKIVTFADKTQHQLFLEPEGEATQEYYLNGFSSSLPLDIQLRALQAIPAFRDVQIYRPGYAIEYDFFDPTQLRHNLETKQIRNLFFAGQINGTTGYEEAGGQGLVAGINAHINCHGGQPFILGRDEAYIGVLIDDLVTKGVDEPYRMFTSRAEYRILLRQDDADMRLTEKSYQMGLAKQDRYDLLREKKESRDAIIRFAETYSVKPQYINSGLEKLGTAPLSHGCKLFDVVLRPQTTLENLADLVPALRAELDKVPASRKEEIIEAAEILIKYSGYIKREQIIADKINRLENIRIKGKFDYNSIQSLSTEARQKLTRIDPDTIAQASRIPGISPSDINILLVLLGR.

An FAD-binding site is contributed by 11–16 (GAGHAG). 271-285 (GPRYCPSIETKIVTF) is a binding site for NAD(+).

This sequence belongs to the MnmG family. As to quaternary structure, homodimer. Heterotetramer of two MnmE and two MnmG subunits. The cofactor is FAD.

Its subcellular location is the cytoplasm. Its function is as follows. NAD-binding protein involved in the addition of a carboxymethylaminomethyl (cmnm) group at the wobble position (U34) of certain tRNAs, forming tRNA-cmnm(5)s(2)U34. This is tRNA uridine 5-carboxymethylaminomethyl modification enzyme MnmG from Parabacteroides distasonis (strain ATCC 8503 / DSM 20701 / CIP 104284 / JCM 5825 / NCTC 11152).